The following is a 670-amino-acid chain: UvrABC system protein B (670 aa).

The Helicase ATP-binding domain occupies 51-433 (EGLKKREQFQ…SARIVEQIIR (383 aa)). 64–71 (GVTGSGKT) lines the ATP pocket. The Beta-hairpin signature appears at 117–140 (YYDYYQPESYLPAKDQYIEKDAQI). One can recognise a Helicase C-terminal domain in the interval 453 to 612 (DVMQEIRKIV…IVPKTIRKPI (160 aa)). Positions 631 to 666 (PNVIIELDAEMREAADRLDFERAIQLRELIKKLEKE) constitute a UVR domain.

It belongs to the UvrB family. As to quaternary structure, forms a heterotetramer with UvrA during the search for lesions. Interacts with UvrC in an incision complex.

The protein resides in the cytoplasm. The UvrABC repair system catalyzes the recognition and processing of DNA lesions. A damage recognition complex composed of 2 UvrA and 2 UvrB subunits scans DNA for abnormalities. Upon binding of the UvrA(2)B(2) complex to a putative damaged site, the DNA wraps around one UvrB monomer. DNA wrap is dependent on ATP binding by UvrB and probably causes local melting of the DNA helix, facilitating insertion of UvrB beta-hairpin between the DNA strands. Then UvrB probes one DNA strand for the presence of a lesion. If a lesion is found the UvrA subunits dissociate and the UvrB-DNA preincision complex is formed. This complex is subsequently bound by UvrC and the second UvrB is released. If no lesion is found, the DNA wraps around the other UvrB subunit that will check the other stand for damage. The protein is UvrABC system protein B of Methanosarcina acetivorans (strain ATCC 35395 / DSM 2834 / JCM 12185 / C2A).